Reading from the N-terminus, the 402-residue chain is UPF0261 protein BP1203 (402 aa).

This sequence belongs to the UPF0261 family.

The sequence is that of UPF0261 protein BP1203 from Bordetella pertussis (strain Tohama I / ATCC BAA-589 / NCTC 13251).